Reading from the N-terminus, the 905-residue chain is Methionine--tRNA ligase, cytoplasmic (905 aa).

One can recognise a GST N-terminal domain in the interval 1 to 75 (MKLFVGEGNP…YFYLSSGHDM (75 aa)). In terms of domain architecture, GST C-terminal spans 72 to 199 (GHDMCDLSNQ…DKGSSVFKPF (128 aa)). The 'HIGH' region signature appears at 271-281 (PYVNNVPHLGN). The 'KMSKS' region signature appears at 591–595 (KFSKS). ATP is bound at residue K594. Disordered regions lie at residues 813–874 (RFGG…VIDP) and 886–905 (LALA…KKKK). Positions 841–874 (GPERVKELMQELEKQGNHVRELKGKKAEKSVIDP) are enriched in basic and acidic residues. A WHEP-TRS domain is found at 844-900 (RVKELMQELEKQGNHVRELKGKKAEKSVIDPEVQKLLALKKELALAEGKSPDPPTQK).

The protein belongs to the class-I aminoacyl-tRNA synthetase family. As to quaternary structure, monomer. Part of a multisubunit complex that groups tRNA ligases for Arg (RARS1), Asp (DARS1), Gln (QARS1), Ile (IARS1), Leu (LARS1), Lys (KARS1), Met (MARS1) the bifunctional ligase for Glu and Pro (EPRS1) and the auxiliary subunits AIMP1/p43, AIMP2/p38 and EEF1E1/p18.

The protein localises to the cytoplasm. It localises to the cytosol. Its subcellular location is the nucleus. The protein resides in the nucleolus. It catalyses the reaction tRNA(Met) + L-methionine + ATP = L-methionyl-tRNA(Met) + AMP + diphosphate. Its function is as follows. Catalyzes the specific attachment of an amino acid to its cognate tRNA in a 2 step reaction: the amino acid (AA) is first activated by ATP to form AA-AMP and then transferred to the acceptor end of the tRNA. Plays a role in the synthesis of ribosomal RNA in the nucleolus. The polypeptide is Methionine--tRNA ligase, cytoplasmic (mars1) (Xenopus laevis (African clawed frog)).